Consider the following 433-residue polypeptide: MLNFISKPVVCLKGEITVPGDKSISHRSIIFGAIAIGTSVIDGFLDGEDCIATLKAFQSMGVRIEGPDKQRVIIHGVGKYGLKQPQNIIDCGNSGTSMRLLAGLLAAQQFDSQLTGDESLLKRPMLRISRPLSQMGADVTTQDGKPPILIKGGKKLNGIHYVMPEASAQVKSCLLLAGMYAEGQTKITENAVSRDHTERMLRTFSYPVQIQDGVIVIDRNGECHGTRLNIPGDISSAAFFIVAASITPGSDILIRNVGINPTRTGIIHILTEMGADIKVLNQRAYGEEPVADLHIRYSQLKGIDIPVSMVPLAIDEFPVIFIAAACAQGKTTLHGAKELRLKESDRIGAMVDGLNQLGVHAEGFDDGILIEGGSIQGGEVNSRGDHRIAMSFAIAGAVASAPVTIKNCANVATSFPSFVTTANILHFQIEEYS.

Residues K22, S23, and R27 each coordinate 3-phosphoshikimate. Phosphoenolpyruvate is bound at residue K22. Residues G95 and R123 each contribute to the phosphoenolpyruvate site. Positions 167, 169, 315, and 342 each coordinate 3-phosphoshikimate. Q169 is a binding site for phosphoenolpyruvate. D315 serves as the catalytic Proton acceptor. 2 residues coordinate phosphoenolpyruvate: R346 and R387.

It belongs to the EPSP synthase family. Monomer.

It is found in the cytoplasm. The catalysed reaction is 3-phosphoshikimate + phosphoenolpyruvate = 5-O-(1-carboxyvinyl)-3-phosphoshikimate + phosphate. It functions in the pathway metabolic intermediate biosynthesis; chorismate biosynthesis; chorismate from D-erythrose 4-phosphate and phosphoenolpyruvate: step 6/7. Its function is as follows. Catalyzes the transfer of the enolpyruvyl moiety of phosphoenolpyruvate (PEP) to the 5-hydroxyl of shikimate-3-phosphate (S3P) to produce enolpyruvyl shikimate-3-phosphate and inorganic phosphate. The polypeptide is 3-phosphoshikimate 1-carboxyvinyltransferase (Legionella pneumophila (strain Corby)).